We begin with the raw amino-acid sequence, 328 residues long: UPF0421 protein SAUSA300_1870 (328 aa).

4 helical membrane-spanning segments follow: residues 19–39, 61–81, 108–128, and 132–152; these read IAIFLTAVFCMALDLTPIYAI, LPATVIGAGFAVLFTYLFGDQ, VAVLTSLAMIPGIHDAYIFNF, and TLTAIIGLVTSGLINFMVFPP.

The protein belongs to the UPF0421 family.

Its subcellular location is the cell membrane. The polypeptide is UPF0421 protein SAUSA300_1870 (Staphylococcus aureus (strain USA300)).